Consider the following 319-residue polypeptide: NADH-cytochrome b5 reductase 2 (319 aa).

The chain crosses the membrane as a helical span at residues 30–46 (LAPVYLTVGLAGLGVGL). Residues 69–173 (QGWVDLKLSE…KGPLPKYPWE (105 aa)) enclose the FAD-binding FR-type domain. An FAD-binding site is contributed by 176 to 211 (KHQHICLIAGGTGITPMYQLARHIFKNPEDKTKVTL).

It belongs to the flavoprotein pyridine nucleotide cytochrome reductase family. FAD serves as cofactor.

It is found in the mitochondrion outer membrane. The enzyme catalyses 2 Fe(III)-[cytochrome b5] + NADH = 2 Fe(II)-[cytochrome b5] + NAD(+) + H(+). Functionally, may mediate the reduction of outer membrane cytochrome b5. The protein is NADH-cytochrome b5 reductase 2 (mcr1) of Aspergillus terreus (strain NIH 2624 / FGSC A1156).